The chain runs to 490 residues: Vacuolar amino acid transporter 7 (490 aa).

At 1-6 (MEATSS) the chain is on the cytoplasmic side. Residues 7–27 (ALSSTANLVKTIVGAGTLAIP) form a helical membrane-spanning segment. Residues 28 to 34 (YSFKSDG) are Vacuolar-facing. The chain crosses the membrane as a helical span at residues 35 to 55 (VLVGVILTLLAAVTSGLGLFV). Residues 56-84 (LSKCSKTLINPRNSSFFTLCMLTYPTLAP) are Cytoplasmic-facing. A helical transmembrane segment spans residues 85-105 (IFDLAMIVQCFGVGLSYLVLI). The Vacuolar segment spans residues 106–108 (GDL). Residues 109–129 (FPGLFGGERNYWIIASAVIII) traverse the membrane as a helical segment. Residues 130–143 (PLCLVKKLDQLKYS) are Cytoplasmic-facing. The chain crosses the membrane as a helical span at residues 144-164 (SILGLFALAYISILVFSHFVF). The Vacuolar segment spans residues 165–190 (ELGKGELTNILRNDICWWKIHDFKGL). The helical transmembrane segment at 191–211 (LSTFSIIIFAFTGSMNLFPMI) threads the bilayer. The Cytoplasmic portion of the chain corresponds to 212-221 (NELKDNSMEN). Residues 222–242 (ITFVINNSISLSTALFLIVGL) form a helical membrane-spanning segment. The Vacuolar portion of the chain corresponds to 243 to 264 (SGYLTFGNETLGNLMLNYDPNS). A helical transmembrane segment spans residues 265-285 (IWIVIGKFCLGSMLILSFPLL). Residues 286–397 (FHPLRIAVNN…FVKSRFYWIT (112 aa)) are Cytoplasmic-facing. The disordered stretch occupies residues 355 to 374 (NGNFDNGSIESQENNNDERG). Polar residues predominate over residues 357–368 (NFDNGSIESQEN). Residues 398–418 (ALLLISMYTLALSVQSFALVL) form a helical membrane-spanning segment. At 419–428 (SFVGATGSTS) the chain is on the vacuolar side. The helical transmembrane segment at 429-449 (ISFTLPGLLGYKLIGLDSLAI) threads the bilayer. At 450–463 (GKMIPPKDRFYKRC) the chain is on the cytoplasmic side. A helical membrane pass occupies residues 464–484 (SLLLVFYGLSVMFLSLYVTVF). At 485 to 490 (NRSDEA) the chain is on the vacuolar side.

Belongs to the amino acid/polyamine transporter 2 family.

It localises to the vacuole membrane. Probable amino acid transporter of unknown specificity. In Saccharomyces cerevisiae (strain ATCC 204508 / S288c) (Baker's yeast), this protein is Vacuolar amino acid transporter 7 (AVT7).